The following is a 444-amino-acid chain: UDP-N-acetylmuramoylalanine--D-glutamate ligase (444 aa).

An ATP-binding site is contributed by 109-115 (GSNGKTT).

Belongs to the MurCDEF family.

It is found in the cytoplasm. The catalysed reaction is UDP-N-acetyl-alpha-D-muramoyl-L-alanine + D-glutamate + ATP = UDP-N-acetyl-alpha-D-muramoyl-L-alanyl-D-glutamate + ADP + phosphate + H(+). The protein operates within cell wall biogenesis; peptidoglycan biosynthesis. Cell wall formation. Catalyzes the addition of glutamate to the nucleotide precursor UDP-N-acetylmuramoyl-L-alanine (UMA). In Bacteroides fragilis (strain ATCC 25285 / DSM 2151 / CCUG 4856 / JCM 11019 / LMG 10263 / NCTC 9343 / Onslow / VPI 2553 / EN-2), this protein is UDP-N-acetylmuramoylalanine--D-glutamate ligase.